The primary structure comprises 62 residues: Photosystem II reaction center protein Z (62 aa).

Helical transmembrane passes span phenylalanine 8–alanine 28 and tyrosine 41–valine 61.

It belongs to the PsbZ family. In terms of assembly, PSII is composed of 1 copy each of membrane proteins PsbA, PsbB, PsbC, PsbD, PsbE, PsbF, PsbH, PsbI, PsbJ, PsbK, PsbL, PsbM, PsbT, PsbX, PsbY, PsbZ, Psb30/Ycf12, peripheral proteins PsbO, CyanoQ (PsbQ), PsbU, PsbV and a large number of cofactors. It forms dimeric complexes.

Its subcellular location is the cellular thylakoid membrane. Its function is as follows. May control the interaction of photosystem II (PSII) cores with the light-harvesting antenna, regulates electron flow through the 2 photosystem reaction centers. PSII is a light-driven water plastoquinone oxidoreductase, using light energy to abstract electrons from H(2)O, generating a proton gradient subsequently used for ATP formation. The chain is Photosystem II reaction center protein Z from Microcystis aeruginosa (strain NIES-843 / IAM M-2473).